The sequence spans 911 residues: Alpha-actinin-4 (911 aa).

The interval 1–269 (MVDYHAANQS…YVSSFYHAFS (269 aa)) is actin-binding. Residues 8 to 31 (NQSYQYGPSSGSNGAGGGGTMGDY) are disordered. Residues 12-26 (QYGPSSGSNGAGGGG) form an interaction with VCL region. At tyrosine 31 the chain carries Phosphotyrosine. Positions 40-61 (RDLLLDPAWEKQQRKTFTAWCN) are interaction with VCL. Calponin-homology (CH) domains are found at residues 50–154 (KQQR…LRFA) and 163–269 (TSAK…HAFS). An LXXLL motif motif is present at residues 84-88 (LMLLL). The segment at 108 to 126 (KINNVNKALDFIASKGVKL) is interaction with VCL. Lysine 114 is modified (N6-acetyllysine). Residues 177 to 192 (TAPYKNVNVQNFHISW) are polyphosphoinositide (PIP2)-binding. At lysine 214 the chain carries N6-acetyllysine. Threonine 249 carries the post-translational modification Phosphothreonine. Spectrin repeat units follow at residues 293–403 (HLME…WLLN), 413–518 (HLAE…ALEK), 528–639 (QLHL…ALLE), and 649–752 (HLRR…EVEN). Residues lysine 592 and lysine 625 each carry the N6-acetyllysine modification. Serine 696 carries the phosphoserine modification. A mediates interaction with MICALL2 region spans residues 736–911 (WEQLLTTIAR…STALYGESDL (176 aa)). EF-hand domains follow at residues 765-800 (EQMQ…LGYD) and 806-841 (QGDA…ETTD). Aspartate 778 contacts Ca(2+). Lysine 779 bears the N6-acetyllysine mark. Ca(2+) contacts are provided by aspartate 780 and glutamate 789. The residue at position 859 (lysine 859) is an N6-acetyllysine. Serine 909 is modified (phosphoserine).

The protein belongs to the alpha-actinin family. Homodimer; antiparallel. Identified in a IGF2BP1-dependent mRNP granule complex containing untranslated mRNAs. Component of the CART complex, at least composed of ACTN4, HGS/HRS, MYO5B and TRIM3. Binds TRIM3 at the N-terminus. Interacts with MAGI1. Interacts with PDLIM2. Identified in a complex with CASK, IQGAP1, MAGI2, NPHS1, SPTAN1 and SPTBN1. Interacts with MICALL2 (preferentially in opened conformation); stimulated by RAB13 activation. Interacts with PPARG and RARA. Binds to VCL; this interaction triggers VCL conformational changes. Interacts with SEPTIN14. Interacts with IGSF8.

The protein localises to the nucleus. It is found in the cytoplasm. Its subcellular location is the cell junction. It localises to the cytoskeleton. The protein resides in the stress fiber. The protein localises to the perinuclear region. F-actin cross-linking protein which is thought to anchor actin to a variety of intracellular structures. This is a bundling protein. Probably involved in vesicular trafficking via its association with the CART complex. The CART complex is necessary for efficient transferrin receptor recycling but not for EGFR degradation. Involved in tight junction assembly in epithelial cells probably through interaction with MICALL2. Links MICALL2 to the actin cytoskeleton and recruits it to the tight junctions. May also function as a transcriptional coactivator, stimulating transcription mediated by the nuclear hormone receptors PPARG and RARA. Association with IGSF8 regulates the immune synapse formation and is required for efficient T-cell activation. The sequence is that of Alpha-actinin-4 from Bos taurus (Bovine).